A 131-amino-acid polypeptide reads, in one-letter code: MEVDCRVISRGKGRGPVLVSTEPLSFLGGVDPGTGRVIDQKHPLHGRSIRGKVLLIPGGKGSTVGSYVIFQMAKNETAPAAIICLNAEPIIATGAIMAGIPMVDRPSEDLLGLLEDSMEVEVDADEGKIRF.

Serine 62 functions as the Proton acceptor in the catalytic mechanism.

It belongs to the AcnX type II small subunit family. As to quaternary structure, heterodimer composed of a large subunit (PMDh-L) and a small subunit (PMDh-S).

The catalysed reaction is (R)-5-phosphomevalonate = (2E)-3-methyl-5-phosphooxypent-2-enoate + H2O. It participates in isoprenoid biosynthesis; isopentenyl diphosphate biosynthesis via mevalonate pathway. Functionally, component of a hydro-lyase that catalyzes the dehydration of mevalonate 5-phosphate (MVA5P) to form trans-anhydromevalonate 5-phosphate (tAHMP). Involved in the archaeal mevalonate (MVA) pathway, which provides fundamental precursors for isoprenoid biosynthesis, such as isopentenyl diphosphate (IPP) and dimethylallyl diphosphate (DMAPP). This is Phosphomevalonate dehydratase small subunit from Methanothermobacter thermautotrophicus (strain ATCC 29096 / DSM 1053 / JCM 10044 / NBRC 100330 / Delta H) (Methanobacterium thermoautotrophicum).